A 254-amino-acid polypeptide reads, in one-letter code: N-acetylglucosamine-induced protein 1 (254 aa).

It is found in the cytoplasm. Its function is as follows. N-acetylglucosamine-induced protein which plays a role in the N-acetylglucosamine metabolic pathway. The polypeptide is N-acetylglucosamine-induced protein 1 (Candida albicans (strain SC5314 / ATCC MYA-2876) (Yeast)).